The primary structure comprises 917 residues: Hexokinase-1 (917 aa).

Methionine 1 bears the N-acetylmethionine mark. Residues 1–10 (MIAAQLLAYY) are mitochondrial-binding peptide (MBP). Hexokinase domains are found at residues 16-458 (DDQV…MVTA) and 464-906 (AEQH…LITA). ATP is bound by residues arginine 30 and 84-89 (DLGGSS). Positions 73–207 (DGSEKGDFIA…DYDANIVAVV (135 aa)) are hexokinase small subdomain 1. 84–91 (DLGGSSFR) serves as a coordination point for D-glucose 6-phosphate. Residues serine 155, 172–173 (TK), and 208–209 (ND) each bind D-glucose. The interval 208 to 447 (NDTVGTMMTC…SDVRFLLSES (240 aa)) is hexokinase large subdomain 1. Aspartate 209 and threonine 232 together coordinate D-glucose 6-phosphate. D-glucose-binding positions include asparagine 235, glutamate 260, and 291 to 294 (QLFE). Serine 337 is modified (phosphoserine). Asparagine 345 is an ATP binding site. 413-415 (DGS) contacts D-glucose 6-phosphate. 425-426 (RR) provides a ligand contact to ATP. Residues serine 449 and 532–536 (DLGGT) contribute to the D-glucose 6-phosphate site. A hexokinase small subdomain 2 region spans residues 521 to 655 (DGTENGDFLA…EFDLDVVAVV (135 aa)). ATP is bound at residue 532–537 (DLGGTN). D-glucose-binding positions include 603–604 (SF), 620–621 (TK), and 656–657 (ND). The tract at residues 656–895 (NDTVGTMMTC…CNVSFLLSED (240 aa)) is hexokinase large subdomain 2. D-glucose 6-phosphate is bound by residues aspartate 657 and threonine 680. Threonine 680 serves as a coordination point for ATP. D-glucose is bound by residues 682 to 683 (SN), glutamate 708, and glutamate 742. Residues 747–748 (GM), 784–788 (TKFLS), and 863–867 (TLYKL) contribute to the ATP site. D-glucose 6-phosphate contacts are provided by residues 861–863 (DGT) and serine 897.

This sequence belongs to the hexokinase family. As to quaternary structure, monomer. Interacts with RABL2/RABL2A; binds preferentially to GTP-bound RABL2. Interacts with VDAC1. The HK1-VDAC1 complex interacts with ATF2. Interacts (via N-terminal spermatogenic cell-specific region) with PFKM (via C-terminus). Interacts with SMAD5. In terms of tissue distribution, isoform 2: Erythrocyte specific. Isoform 3: Testis-specific. Isoform 4: Testis-specific.

The protein resides in the mitochondrion outer membrane. It is found in the cytoplasm. Its subcellular location is the cytosol. The catalysed reaction is a D-hexose + ATP = a D-hexose 6-phosphate + ADP + H(+). It catalyses the reaction D-fructose + ATP = D-fructose 6-phosphate + ADP + H(+). The enzyme catalyses D-glucose + ATP = D-glucose 6-phosphate + ADP + H(+). It carries out the reaction D-mannose + ATP = D-mannose 6-phosphate + ADP + H(+). The catalysed reaction is D-glucosamine + ATP = D-glucosamine 6-phosphate + ADP + H(+). Its pathway is carbohydrate metabolism; hexose metabolism. It participates in carbohydrate degradation; glycolysis; D-glyceraldehyde 3-phosphate and glycerone phosphate from D-glucose: step 1/4. Hexokinase is an allosteric enzyme inhibited by its product D-glucose 6-phosphate. Hexokinase activity is inhibited by N-acetyl-D-glucosamine. Its function is as follows. Catalyzes the phosphorylation of various hexoses, such as D-glucose, D-glucosamine, D-fructose, D-mannose and 2-deoxy-D-glucose, to hexose 6-phosphate (D-glucose 6-phosphate, D-glucosamine 6-phosphate, D-fructose 6-phosphate, D-mannose 6-phosphate and 2-deoxy-D-glucose 6-phosphate, respectively). Does not phosphorylate N-acetyl-D-glucosamine. Mediates the initial step of glycolysis by catalyzing phosphorylation of D-glucose to D-glucose 6-phosphate. Involved in innate immunity and inflammation by acting as a pattern recognition receptor for bacterial peptidoglycan. When released in the cytosol, N-acetyl-D-glucosamine component of bacterial peptidoglycan inhibits the hexokinase activity of HK1 and causes its dissociation from mitochondrial outer membrane, thereby activating the NLRP3 inflammasome. The protein is Hexokinase-1 of Homo sapiens (Human).